The primary structure comprises 211 residues: Ribosomal RNA large subunit methyltransferase E (211 aa).

Residues glycine 60, tryptophan 62, aspartate 80, aspartate 96, and aspartate 121 each contribute to the S-adenosyl-L-methionine site. Lysine 161 acts as the Proton acceptor in catalysis.

This sequence belongs to the class I-like SAM-binding methyltransferase superfamily. RNA methyltransferase RlmE family.

The protein localises to the cytoplasm. It carries out the reaction uridine(2552) in 23S rRNA + S-adenosyl-L-methionine = 2'-O-methyluridine(2552) in 23S rRNA + S-adenosyl-L-homocysteine + H(+). Its function is as follows. Specifically methylates the uridine in position 2552 of 23S rRNA at the 2'-O position of the ribose in the fully assembled 50S ribosomal subunit. The protein is Ribosomal RNA large subunit methyltransferase E of Cellvibrio japonicus (strain Ueda107) (Pseudomonas fluorescens subsp. cellulosa).